The chain runs to 55 residues: Large ribosomal subunit protein bL33 (55 aa).

Positions M1–L11 are enriched in basic and acidic residues. The disordered stretch occupies residues M1 to T24. The segment covering T14–T24 has biased composition (polar residues).

It belongs to the bacterial ribosomal protein bL33 family.

The polypeptide is Large ribosomal subunit protein bL33 (Burkholderia multivorans (strain ATCC 17616 / 249)).